The following is a 429-amino-acid chain: MSQITDVYAREILDSRGNPTLEVEVFLESGAMGRAAVPSGASTGEREALELRDGDKGRYLGKGVLKAVANVNDIIADEVIGMEATDQVGIDRKMLDLDGTEYKSKLGANAILGVSLAVAKAAADEVGLSLYQYIGGSNAKELPLPMMNIINGGAHADNNVDIQEFMIMPAGAKNFAEALRMGAEIFHALKAVLKAKGYNTAVGDEGGFAPNLKSNEEALQVIMEAITKAGFKPGEDVLLALDVASSELFKDGVYTLENEAQPQKTADQLIDFYENLVNKYPIISIEDGMAENDWDGWKKMTERLGKRIQIVGDDLFVTNPRILKEGIDKGIANSILIKLNQIGTLTETLDAIEMAKRAGYTTVISHRSGETEDTTLADLSVAVNAGQIKTGSLCRTDRVCKYNQLLRIEDELDAVALFRGKEVFYNLKK.

Gln-163 contributes to the (2R)-2-phosphoglycerate binding site. Catalysis depends on Glu-205, which acts as the Proton donor. Residues Asp-242, Glu-286, and Asp-313 each coordinate Mg(2+). Positions 338, 367, 368, and 389 each coordinate (2R)-2-phosphoglycerate. The active-site Proton acceptor is the Lys-338.

The protein belongs to the enolase family. Mg(2+) serves as cofactor.

Its subcellular location is the cytoplasm. It is found in the secreted. The protein resides in the cell surface. It catalyses the reaction (2R)-2-phosphoglycerate = phosphoenolpyruvate + H2O. The protein operates within carbohydrate degradation; glycolysis; pyruvate from D-glyceraldehyde 3-phosphate: step 4/5. Functionally, catalyzes the reversible conversion of 2-phosphoglycerate (2-PG) into phosphoenolpyruvate (PEP). It is essential for the degradation of carbohydrates via glycolysis. In Geotalea uraniireducens (strain Rf4) (Geobacter uraniireducens), this protein is Enolase.